The chain runs to 1752 residues: DNA-directed RNA polymerase II subunit rpb1 (1752 aa).

Positions 69, 72, 79, 82, 109, 112, 150, and 175 each coordinate Zn(2+). The Mg(2+) site is built by Asp-487, Asp-489, and Asp-491. The interval 816-828 (PQEFFFHAMAGRE) is bridging helix. Lys-1252 is covalently cross-linked (Glycyl lysine isopeptide (Lys-Gly) (interchain with G-Cter in ubiquitin)). 4 positions are modified to phosphoserine: Ser-1489, Ser-1499, Ser-1506, and Ser-1529. Tyr-1531 is subject to Phosphotyrosine. Positions 1554–1752 (TSPSYSPSSP…SPSYSPTSPS (199 aa)) are disordered. 5 tandem repeats follow at residues 1558 to 1564 (YSPSSPG), 1578 to 1584 (YSPTSPS), 1585 to 1591 (YSPTSPS), 1592 to 1598 (YSPTSPS), and 1599 to 1605 (YSPTSPS). The tract at residues 1558 to 1752 (YSPSSPGYST…SPSYSPTSPS (195 aa)) is C-terminal domain (CTD); 26 X 7 AA approximate tandem repeats of Y-S-P-[TS]-S-P-S. The 6; approximate repeat unit spans residues 1606-1612 (YSATSPS). Tandem repeats lie at residues 1613–1619 (YSPTSPS), 1620–1626 (YSPTSPS), 1627–1633 (YSPTSPS), 1634–1640 (YSPTSPS), 1641–1647 (YSPTSPS), 1648–1654 (YSPTSPS), 1655–1661 (YSPTSPS), 1662–1668 (YSPTSPS), 1669–1675 (YSPTSPS), 1676–1682 (YSPTSPS), 1683–1689 (YSPTSPS), 1690–1696 (YSPTSPS), 1697–1703 (YSPTSPS), 1704–1710 (YSPTSPS), 1711–1717 (YSPTSPS), 1718–1724 (YSPTSPS), 1725–1731 (YSPTSPS), 1732–1738 (YSPTSPS), 1739–1745 (YSPTSPS), and 1746–1752 (YSPTSPS).

This sequence belongs to the RNA polymerase beta' chain family. In terms of assembly, component of the RNA polymerase II (Pol II) complex consisting of 12 subunits. The tandem 7 residues repeats in the C-terminal domain (CTD) can be highly phosphorylated. The phosphorylation activates Pol II. Phosphorylation occurs mainly at residues 'Ser-2' and 'Ser-5' of the heptapeptide repeat. The phosphorylation state is believed to result from the balanced action of site-specific CTD kinases and phosphatase, and a 'CTD code' that specifies the position of Pol II within the transcription cycle has been proposed. Post-translationally, following transcription stress, the elongating form of RNA polymerase II (RNA pol IIo) is polyubiquitinated via 'Lys-63'-linkages on Lys-1252 at DNA damage sites without leading to degradation: ubiquitination promotes RNA pol IIo backtracking to allow access by the transcription-coupled nucleotide excision repair (TC-NER) machinery. Subsequent def1-dependent polyubiquitination by the elongin complex via 'Lys-48'-linkages may lead to proteasome-mediated degradation; presumably at stalled RNA pol II where TC-NER has failed, to halt global transcription and enable 'last resort' DNA repair pathways.

Its subcellular location is the nucleus. It catalyses the reaction RNA(n) + a ribonucleoside 5'-triphosphate = RNA(n+1) + diphosphate. Functionally, DNA-dependent RNA polymerase catalyzes the transcription of DNA into RNA using the four ribonucleoside triphosphates as substrates. Largest and catalytic component of RNA polymerase II which synthesizes mRNA precursors and many functional non-coding RNAs. Forms the polymerase active center together with the second largest subunit. Pol II is the central component of the basal RNA polymerase II transcription machinery. It is composed of mobile elements that move relative to each other. RPB1 is part of the core element with the central large cleft, the clamp element that moves to open and close the cleft and the jaws that are thought to grab the incoming DNA template. At the start of transcription, a single-stranded DNA template strand of the promoter is positioned within the central active site cleft of Pol II. A bridging helix emanates from RPB1 and crosses the cleft near the catalytic site and is thought to promote translocation of Pol II by acting as a ratchet that moves the RNA-DNA hybrid through the active site by switching from straight to bent conformations at each step of nucleotide addition. During transcription elongation, Pol II moves on the template as the transcript elongates. Elongation is influenced by the phosphorylation status of the C-terminal domain (CTD) of Pol II largest subunit (RPB1), which serves as a platform for assembly of factors that regulate transcription initiation, elongation, termination and mRNA processing. The chain is DNA-directed RNA polymerase II subunit rpb1 (rpb1) from Schizosaccharomyces pombe (strain 972 / ATCC 24843) (Fission yeast).